The following is a 290-amino-acid chain: Glycine--tRNA ligase alpha subunit (290 aa).

Belongs to the class-II aminoacyl-tRNA synthetase family. As to quaternary structure, tetramer of two alpha and two beta subunits.

The protein localises to the cytoplasm. The enzyme catalyses tRNA(Gly) + glycine + ATP = glycyl-tRNA(Gly) + AMP + diphosphate. The polypeptide is Glycine--tRNA ligase alpha subunit (Gloeobacter violaceus (strain ATCC 29082 / PCC 7421)).